The sequence spans 190 residues: Potassium-transporting ATPase KdpC subunit (190 aa).

Residues 13–33 traverse the membrane as a helical segment; the sequence is VGFLLLTLMCGVVYPGIVTIF.

It belongs to the KdpC family. As to quaternary structure, the system is composed of three essential subunits: KdpA, KdpB and KdpC.

It localises to the cell membrane. Part of the high-affinity ATP-driven potassium transport (or Kdp) system, which catalyzes the hydrolysis of ATP coupled with the electrogenic transport of potassium into the cytoplasm. This subunit acts as a catalytic chaperone that increases the ATP-binding affinity of the ATP-hydrolyzing subunit KdpB by the formation of a transient KdpB/KdpC/ATP ternary complex. The polypeptide is Potassium-transporting ATPase KdpC subunit (Listeria monocytogenes serotype 4a (strain HCC23)).